Consider the following 467-residue polypeptide: Cysteine--tRNA ligase (467 aa).

Residue Cys27 coordinates Zn(2+). The short motif at 29–39 is the 'HIGH' region element; the sequence is ATVQGLPHIGH. Residues Cys209, His234, and Glu238 each coordinate Zn(2+). The short motif at 265–269 is the 'KMSKS' region element; the sequence is KMSKS. ATP is bound at residue Lys268.

It belongs to the class-I aminoacyl-tRNA synthetase family. As to quaternary structure, monomer. Zn(2+) serves as cofactor.

Its subcellular location is the cytoplasm. It catalyses the reaction tRNA(Cys) + L-cysteine + ATP = L-cysteinyl-tRNA(Cys) + AMP + diphosphate. The chain is Cysteine--tRNA ligase from Mycolicibacterium gilvum (strain PYR-GCK) (Mycobacterium gilvum (strain PYR-GCK)).